Here is a 327-residue protein sequence, read N- to C-terminus: Zinc transport protein ZntB (327 aa).

The Cytoplasmic segment spans residues 1–271 (MDVVAGKALQ…AMNRRTYTMS (271 aa)). Residues 272-292 (LLAMVFLPTTFLTGLFGVNLG) traverse the membrane as a helical segment. At 293-300 (GIPGNTDS) the chain is on the periplasmic side. Residues 301-321 (FGFATFCMMLVVLVLGVAWWL) form a helical membrane-spanning segment. The Cytoplasmic segment spans residues 322-327 (KHSKWL).

This sequence belongs to the CorA metal ion transporter (MIT) (TC 1.A.35) family.

The protein resides in the cell inner membrane. It carries out the reaction Zn(2+)(out) + H(+)(out) = Zn(2+)(in) + H(+)(in). In terms of biological role, zinc transporter. Acts as a Zn(2+):proton symporter, which likely mediates zinc ion uptake. The sequence is that of Zinc transport protein ZntB from Yersinia enterocolitica serotype O:8 / biotype 1B (strain NCTC 13174 / 8081).